The chain runs to 177 residues: Co-chaperone protein HscB homolog (177 aa).

One can recognise a J domain in the interval 8 to 80 (DYFSLFGMPR…LSRAQYLLEL (73 aa)).

Belongs to the HscB family. As to quaternary structure, interacts with HscA and stimulates its ATPase activity.

Its function is as follows. Co-chaperone involved in the maturation of iron-sulfur cluster-containing proteins. Seems to help targeting proteins to be folded toward HscA. The sequence is that of Co-chaperone protein HscB homolog from Azoarcus sp. (strain BH72).